Here is a 160-residue protein sequence, read N- to C-terminus: Prostaglandin E synthase 3 (160 aa).

In terms of domain architecture, CS spans 1 to 90; that stretch reads MQPASAKWYD…ESGQSWPRLT (90 aa). At lysine 33 the chain carries N6-acetyllysine. Residue lysine 35 forms a Glycyl lysine isopeptide (Lys-Gly) (interchain with G-Cter in SUMO2) linkage. Serine 44 carries the phosphoserine modification. Lysine 65 participates in a covalent cross-link: Glycyl lysine isopeptide (Lys-Gly) (interchain with G-Cter in SUMO2). A phosphoserine mark is found at serine 85, serine 100, serine 113, serine 118, serine 148, and serine 151. The segment at 124–160 is disordered; that stretch reads SEMMNNMGGDEDVDLPEVDGADDDSQDSDDEKMPDLE. The span at 132-153 shows a compositional bias: acidic residues; that stretch reads GDEDVDLPEVDGADDDSQDSDD. The PXLE motif signature appears at 157–160; that stretch reads PDLE.

Belongs to the p23/wos2 family. In terms of assembly, probably forms a complex composed of chaperones HSP90 and HSP70, co-chaperones STIP1/HOP, CDC37, PPP5C, PTGES3/p23, TSC1 and client protein TSC2. Binds to the progesterone receptor. Interacts with TERT; the interaction, together with HSP90AA1, is required for correct assembly and stabilization of the telomerase holoenzyme complex. Interacts (via PXLE motif) with EGLN1/PHD2, recruiting EGLN1/PHD2 to the HSP90 pathway to facilitate HIF alpha proteins hydroxylation. Interacts with HSP90AA1, FLCN, FNIP1 and FNIP2. In terms of processing, proteolytically cleaved by caspase-7 (CASP7) in response to apoptosis, leading to its inactivation. As to expression, detected in testis and ovary, at lower levels in endometrium, myometrium, kidney and lung, and only faintly in spleen, heart and muscle (at protein level). Expressed at high levels in glandular and luminal epithelial cells of the endometrium, but also detected in stromal cells (at protein level).

It localises to the cytoplasm. The enzyme catalyses prostaglandin H2 = prostaglandin E2. Its pathway is lipid metabolism; prostaglandin biosynthesis. In terms of biological role, cytosolic prostaglandin synthase that catalyzes the oxidoreduction of prostaglandin endoperoxide H2 (PGH2) to prostaglandin E2 (PGE2). Molecular chaperone that localizes to genomic response elements in a hormone-dependent manner and disrupts receptor-mediated transcriptional activation, by promoting disassembly of transcriptional regulatory complexes. Facilitates HIF alpha proteins hydroxylation via interaction with EGLN1/PHD2, leading to recruit EGLN1/PHD2 to the HSP90 pathway. This is Prostaglandin E synthase 3 (PTGES3) from Bos taurus (Bovine).